Consider the following 328-residue polypeptide: Glycerol-3-phosphate dehydrogenase [NAD(P)+] (328 aa).

Residues tryptophan 11, arginine 30, and lysine 103 each contribute to the NADPH site. Sn-glycerol 3-phosphate contacts are provided by lysine 103, glycine 132, and serine 134. Alanine 136 is an NADPH binding site. The sn-glycerol 3-phosphate site is built by lysine 187, aspartate 240, serine 250, arginine 251, and asparagine 252. Catalysis depends on lysine 187, which acts as the Proton acceptor. Arginine 251 is a binding site for NADPH. Residues valine 275 and glutamate 277 each coordinate NADPH.

It belongs to the NAD-dependent glycerol-3-phosphate dehydrogenase family.

The protein localises to the cytoplasm. The enzyme catalyses sn-glycerol 3-phosphate + NAD(+) = dihydroxyacetone phosphate + NADH + H(+). The catalysed reaction is sn-glycerol 3-phosphate + NADP(+) = dihydroxyacetone phosphate + NADPH + H(+). It participates in membrane lipid metabolism; glycerophospholipid metabolism. Its function is as follows. Catalyzes the reduction of the glycolytic intermediate dihydroxyacetone phosphate (DHAP) to sn-glycerol 3-phosphate (G3P), the key precursor for phospholipid synthesis. The polypeptide is Glycerol-3-phosphate dehydrogenase [NAD(P)+] (Thiobacillus denitrificans (strain ATCC 25259 / T1)).